A 314-amino-acid polypeptide reads, in one-letter code: Olfactory receptor 9A4 (314 aa).

Topologically, residues Met1–His24 are extracellular. An N-linked (GlcNAc...) asparagine glycan is attached at Asn4. Residues Ile25 to Ile45 form a helical membrane-spanning segment. The Cytoplasmic segment spans residues Met46–Arg53. Residues Leu54 to Thr74 traverse the membrane as a helical segment. Residues Ile75–Val99 are Extracellular-facing. Residues Cys97 and Cys189 are joined by a disulfide bond. A helical membrane pass occupies residues Gln100–Val120. Topologically, residues Asp121–His139 are cytoplasmic. The chain crosses the membrane as a helical span at residues Thr140 to Val160. Residues Tyr161–Phe197 are Extracellular-facing. Asn190 is a glycosylation site (N-linked (GlcNAc...) asparagine). The chain crosses the membrane as a helical span at residues Ile198–Ser217. The Cytoplasmic portion of the chain corresponds to Asn218–Ser237. The helical transmembrane segment at Phe238–Leu258 threads the bilayer. The Extracellular portion of the chain corresponds to Tyr259–Asn271. The helical transmembrane segment at Trp272 to Leu292 threads the bilayer. Residues Arg293–Asn314 are Cytoplasmic-facing.

The protein belongs to the G-protein coupled receptor 1 family.

It is found in the cell membrane. In terms of biological role, odorant receptor. The protein is Olfactory receptor 9A4 (OR9A4) of Homo sapiens (Human).